The sequence spans 333 residues: DNA-directed RNA polymerase subunit alpha (333 aa).

The interval 1–234 is alpha N-terminal domain (alpha-NTD); sequence MQSSVNEFLT…QQLAAFVDLK (234 aa). Residues 248–333 are alpha C-terminal domain (alpha-CTD); it reads IDPILLRPVD…SLKKDDKATA (86 aa).

This sequence belongs to the RNA polymerase alpha chain family. In terms of assembly, homodimer. The RNAP catalytic core consists of 2 alpha, 1 beta, 1 beta' and 1 omega subunit. When a sigma factor is associated with the core the holoenzyme is formed, which can initiate transcription.

The catalysed reaction is RNA(n) + a ribonucleoside 5'-triphosphate = RNA(n+1) + diphosphate. Functionally, DNA-dependent RNA polymerase catalyzes the transcription of DNA into RNA using the four ribonucleoside triphosphates as substrates. In Pseudomonas putida (Arthrobacter siderocapsulatus), this protein is DNA-directed RNA polymerase subunit alpha.